The sequence spans 589 residues: Outer envelope protein 64, chloroplastic (589 aa).

Position 1 (M1) is a topological domain, chloroplast intermembrane. Residues 2-22 (ASQAANLWVLLGLGLAGILML) traverse the membrane as a helical segment. At 23–141 (TKKLKKTVRE…NPAAPTRIPG (119 aa)) the chain is on the cytoplasmic side. The chain crosses the membrane as a helical span at residues 142-162 (GACSGAAVAVATNAVDFALGI). Residues 163 to 398 (DTVGGVRVPA…EITSEDYQNR (236 aa)) lie on the Chloroplast intermembrane side of the membrane. Residues 399-419 (ASSLLSIASISGCCQVTVPLG) form a helical membrane-spanning segment. Residues 420 to 589 (HHEKCPISVS…LSAERLRKFQ (170 aa)) lie on the Cytoplasmic side of the membrane. 3 TPR repeats span residues 474 to 507 (AEIA…SDNN), 508 to 541 (ATYY…DKKN), and 542 to 575 (VKAY…EPNN).

In terms of assembly, part of the Toc complex and of the intermembrane space complex. In terms of tissue distribution, expressed in roots, cotyledons, leaves and flower buds.

It is found in the plastid. The protein localises to the chloroplast outer membrane. Chaperone receptor mediating Hsp90-dependent protein targeting to chloroplasts. Bi-functional preprotein receptor acting on both sides of the membrane. Not essential for an efficient import of pre-proteins into plastids. The chain is Outer envelope protein 64, chloroplastic (OEP64) from Arabidopsis thaliana (Mouse-ear cress).